The primary structure comprises 93 residues: Small ribosomal subunit protein uS19 (93 aa).

Belongs to the universal ribosomal protein uS19 family.

Protein S19 forms a complex with S13 that binds strongly to the 16S ribosomal RNA. The chain is Small ribosomal subunit protein uS19 from Mycolicibacterium smegmatis (strain ATCC 700084 / mc(2)155) (Mycobacterium smegmatis).